The chain runs to 350 residues: Transmembrane protein 185A (350 aa).

The next 7 helical transmembrane spans lie at 16–36 (LIYA…DGII), 41–61 (WAVF…ASVG), 81–101 (FKAM…EVLV), 111–131 (FWLL…AACV), 177–197 (ILMS…VLFL), 211–231 (ITMA…EILL), and 240–260 (AFSC…LMAT). Positions 298–350 (DLHHEDNEETEETPVPEPPKIAPMFRKKARVVITQSPGKYVLPPPKLNIEMPD) are mediates interaction with MAP1B.

It belongs to the TMEM185 family. As to quaternary structure, interacts with MAP1B.

It localises to the cell projection. The protein resides in the dendrite. It is found in the membrane. This Homo sapiens (Human) protein is Transmembrane protein 185A (TMEM185A).